The sequence spans 528 residues: FAD-dependent monooxygenase DEP2 (528 aa).

A signal peptide spans 1 to 23; it reads MEDGRSTFKVIIIGAGVTGLTLA. Positions 37, 110, 311, and 324 each coordinate FAD. Residues 479–499 form a helical membrane-spanning segment; that stretch reads VFPQILGVLMVMWSSVWLFHL. An N-linked (GlcNAc...) asparagine glycan is attached at N521.

This sequence belongs to the paxM FAD-dependent monooxygenase family. The cofactor is FAD.

The protein resides in the membrane. The protein operates within polyketide biosynthesis. Its function is as follows. FAD-dependent monooxygenase; part of the gene cluster that mediates the biosynthesis of depudecin, a highly oxidized eleven-carbon linear polyketide that acts as a histone deacetylase (HDAC) inhibitor and makes a small contribution to pathogenesis. The reducing polyketide synthase DEP5 is the central enzyme in depudecin biosynthesis by yielding the backbone polyketide chain. The monooxygenases DEP2 and DEP4, as well as the uncharacterized protein DEP1, then act as tailoring enzymes to modify the intermediate polyketide chain into depudecin. This chain is FAD-dependent monooxygenase DEP2, found in Alternaria brassicicola (Dark leaf spot agent).